Reading from the N-terminus, the 468-residue chain is Siroheme synthase (468 aa).

The precorrin-2 dehydrogenase /sirohydrochlorin ferrochelatase stretch occupies residues 1–203 (MQYLPIFLNI…GQEEEAEGAL (203 aa)). NAD(+) contacts are provided by residues 22–23 (TV) and 43–44 (PK). Ser128 is modified (phosphoserine). The segment at 216–468 (GEVYLVGAGP…VPDREPLDAR (253 aa)) is uroporphyrinogen-III C-methyltransferase. S-adenosyl-L-methionine is bound at residue Pro225. The active-site Proton acceptor is Asp248. The active-site Proton donor is Lys270. Residues 301–303 (GGD), Ile306, 331–332 (TA), Met383, and Gly412 each bind S-adenosyl-L-methionine.

This sequence in the N-terminal section; belongs to the precorrin-2 dehydrogenase / sirohydrochlorin ferrochelatase family. The protein in the C-terminal section; belongs to the precorrin methyltransferase family.

The enzyme catalyses uroporphyrinogen III + 2 S-adenosyl-L-methionine = precorrin-2 + 2 S-adenosyl-L-homocysteine + H(+). The catalysed reaction is precorrin-2 + NAD(+) = sirohydrochlorin + NADH + 2 H(+). It catalyses the reaction siroheme + 2 H(+) = sirohydrochlorin + Fe(2+). The protein operates within cofactor biosynthesis; adenosylcobalamin biosynthesis; precorrin-2 from uroporphyrinogen III: step 1/1. It participates in cofactor biosynthesis; adenosylcobalamin biosynthesis; sirohydrochlorin from precorrin-2: step 1/1. Its pathway is porphyrin-containing compound metabolism; siroheme biosynthesis; precorrin-2 from uroporphyrinogen III: step 1/1. It functions in the pathway porphyrin-containing compound metabolism; siroheme biosynthesis; siroheme from sirohydrochlorin: step 1/1. The protein operates within porphyrin-containing compound metabolism; siroheme biosynthesis; sirohydrochlorin from precorrin-2: step 1/1. Its function is as follows. Multifunctional enzyme that catalyzes the SAM-dependent methylations of uroporphyrinogen III at position C-2 and C-7 to form precorrin-2 via precorrin-1. Then it catalyzes the NAD-dependent ring dehydrogenation of precorrin-2 to yield sirohydrochlorin. Finally, it catalyzes the ferrochelation of sirohydrochlorin to yield siroheme. In Nitrosococcus oceani (strain ATCC 19707 / BCRC 17464 / JCM 30415 / NCIMB 11848 / C-107), this protein is Siroheme synthase.